The chain runs to 270 residues: 4-hydroxy-tetrahydrodipicolinate reductase (270 aa).

NAD(+) contacts are provided by residues 11 to 16 and Glu37; that span reads GAGGRM. Residue Arg38 coordinates NADP(+). Residues 101-103 and 125-128 each bind NAD(+); these read GTT and APNM. His158 (proton donor/acceptor) is an active-site residue. A (S)-2,3,4,5-tetrahydrodipicolinate-binding site is contributed by His159. The Proton donor role is filled by Lys162. Residue 168–169 coordinates (S)-2,3,4,5-tetrahydrodipicolinate; sequence GT.

Belongs to the DapB family.

It is found in the cytoplasm. It carries out the reaction (S)-2,3,4,5-tetrahydrodipicolinate + NAD(+) + H2O = (2S,4S)-4-hydroxy-2,3,4,5-tetrahydrodipicolinate + NADH + H(+). It catalyses the reaction (S)-2,3,4,5-tetrahydrodipicolinate + NADP(+) + H2O = (2S,4S)-4-hydroxy-2,3,4,5-tetrahydrodipicolinate + NADPH + H(+). It functions in the pathway amino-acid biosynthesis; L-lysine biosynthesis via DAP pathway; (S)-tetrahydrodipicolinate from L-aspartate: step 4/4. In terms of biological role, catalyzes the conversion of 4-hydroxy-tetrahydrodipicolinate (HTPA) to tetrahydrodipicolinate. This is 4-hydroxy-tetrahydrodipicolinate reductase from Shewanella sp. (strain W3-18-1).